A 248-amino-acid chain; its full sequence is Probable transcriptional regulatory protein M446_6579 (248 aa).

It belongs to the TACO1 family.

Its subcellular location is the cytoplasm. In Methylobacterium sp. (strain 4-46), this protein is Probable transcriptional regulatory protein M446_6579.